A 688-amino-acid chain; its full sequence is Phosphatidylinositol 4-phosphate 5-kinase type-1 gamma (688 aa).

The segment at 48–71 is disordered; it reads GQPGPGHGKKLGHRGVDASGETTY. A PIPK domain is found at 75-443; the sequence is TSSTLKGAIQ…RFFKFMSSTV (369 aa). Lys265 and Lys268 each carry N6-acetyllysine. Arg459 carries the asymmetric dimethylarginine; alternate modification. Residue Arg459 is modified to Omega-N-methylarginine; alternate. Over residues 525-534 the composition is skewed to low complexity; sequence TTLSSTSLSI. Disordered regions lie at residues 525–565 and 592–629; these read TTLS…QEEL and GAGVEVPPSGASAAATVEVDAASQASEPASQASDEEDA. Phosphoserine is present on Ser554. Positions 602 to 623 are enriched in low complexity; the sequence is ASAAATVEVDAASQASEPASQA. A Phosphotyrosine; by EGFR modification is found at Tyr635. Tyr671 is modified (phosphotyrosine; by CSK). Ser672 carries the post-translational modification Phosphoserine; by CDK5, MAPK1 and CDK1. A phosphoserine mark is found at Ser682 and Ser686. Thr688 is subject to Phosphothreonine.

As to quaternary structure, interacts with TLN1. Interacts with TLN2; interaction stimulates 1-phosphatidylinositol-4-phosphate 5-kinase activity. May compete with beta-integrins for the same binding site on TLN1 and TLN2. Interacts with ARF6; interaction stimulates 1-phosphatidylinositol-4-phosphate 5-kinase activity. Interacts with AP2B1. Interacts with AP2M1; phosphorylation of PIP5K1C by CSK disrupts the interaction; clathrin competes with PIP5K1C. Interacts with CDH1. Interacts with CSK. Interacts with PLCG1; interaction is abolished upon EGF stimulation. Interacts with LAPTM4B; promotes SNX5 association with LAPTM4B; kinase activity of PIP5K1C is required; interaction is regulated by phosphatidylinositol 4,5-bisphosphate generated by PIP5K1C. In terms of processing, phosphorylation on Ser-672 negatively regulates binding to TLN2 and is strongly stimulated in mitosis. Phosphorylation on Tyr-671 is necessary for targeting to focal adhesions. Phosphorylation on Ser-672 and Tyr-671 are mutually exclusive. Phosphorylated by SYK and CSK. Tyrosine phosphorylation is enhanced by PTK2 signaling. Phosphorylated at Tyr-635 upon EGF stimulation. Some studies suggest that phosphorylation on Tyr-671 enhances binding to tailins (TLN1 and TLN2); others that phosphorylation at Tyr-671 does not directly enhance binding to tailins (TLN1 and TLN2) but may act indirectly by inhibiting phosphorylation at Ser-672. Acetylation at Lys-265 and Lys-268 seems to decrease lipid kinase activity. Deacetylation of these sites by SIRT1 positively regulates the exocytosis of TSH-containing granules from pituitary cells.

It localises to the cell membrane. Its subcellular location is the endomembrane system. The protein localises to the cytoplasm. It is found in the cell junction. The protein resides in the focal adhesion. It localises to the adherens junction. Its subcellular location is the cell projection. The protein localises to the ruffle membrane. It is found in the phagocytic cup. The protein resides in the uropodium. It catalyses the reaction a 1,2-diacyl-sn-glycero-3-phospho-(1D-myo-inositol 4-phosphate) + ATP = a 1,2-diacyl-sn-glycero-3-phospho-(1D-myo-inositol-4,5-bisphosphate) + ADP + H(+). The enzyme catalyses 1-octadecanoyl-2-(5Z,8Z,11Z,14Z)-eicosatetraenoyl-sn-glycero-3-phospho-1D-myo-inositol 4-phosphate + ATP = 1-octadecanoyl-2-(5Z,8Z,11Z,14Z)-eicosatetraenoyl-sn-glycero-3-phospho-1D-myo-inositol 4,5-bisphosphate + ADP + H(+). The catalysed reaction is 1-octadecanoyl-2-(9Z)-octadecenoyl-sn-glycero-3-phospho-1D-myo-inositol 4-phosphate + ATP = 1-octadecanoyl-2-(9Z)-octadecenoyl-sn-glycero-3-phospho-1D-myo-inositol 4,5-bisphosphate + ADP + H(+). It carries out the reaction 1-octadecanoyl-2-(9Z)-octadecenoyl-sn-glycero-3-phospho-1D-myo-inositol + ATP = 1-octadecanoyl-2-(9Z)-octadecenoyl-sn-glycero-3-phospho-1D-myo-inositol 5-phosphate + ADP + H(+). It catalyses the reaction 1-octadecanoyl-2-(9Z,12Z)-octadecadienoyl-sn-glycero-3-phospho-1D-myo-inositol + ATP = 1-octadecanoyl-2-(9Z,12Z)-octadecadienoyl-sn-glycero-3-phospho-1D-myo-inositol 5-phosphate + ADP + H(+). The enzyme catalyses 1-octadecanoyl-2-(5Z,8Z,11Z,14Z-eicosatetraenoyl)-sn-glycero-3-phospho-(1D-myo-inositol) + ATP = 1-octadecanoyl-2-(5Z,8Z,11Z,14Z)-eicosatetraenoyl-sn-glycero-3-phospho-1D-myo-inositol 5-phosphate + ADP + H(+). The catalysed reaction is 1,2-di-(9Z,12Z)-octadecadienoyl-sn-glycero-3-phospho-1D-myo-inositol + ATP = 1,2-di(9Z,12Z)-octadecadienoyl-sn-glycero-3-phospho-1D-myo-inositol 5-phosphate + ADP + H(+). Its function is as follows. Catalyzes the phosphorylation of phosphatidylinositol 4-phosphate (PtdIns(4)P/PI4P) to form phosphatidylinositol 4,5-bisphosphate (PtdIns(4,5)P2/PIP2), a lipid second messenger that regulates several cellular processes such as signal transduction, vesicle trafficking, actin cytoskeleton dynamics, cell adhesion, and cell motility. PtdIns(4,5)P2 can directly act as a second messenger or can be utilized as a precursor to generate other second messengers: inositol 1,4,5-trisphosphate (IP3), diacylglycerol (DAG) or phosphatidylinositol-3,4,5-trisphosphate (PtdIns(3,4,5)P3/PIP3). PIP5K1A-mediated phosphorylation of PtdIns(4)P is the predominant pathway for PtdIns(4,5)P2 synthesis. Together with PIP5K1A, is required for phagocytosis, both enzymes regulating different types of actin remodeling at sequential steps. Promotes particle attachment by generating the pool of PtdIns(4,5)P2 that induces controlled actin depolymerization to facilitate Fc-gamma-R clustering. Mediates RAC1-dependent reorganization of actin filaments. Required for synaptic vesicle transport. Controls the plasma membrane pool of PtdIns(4,5)P2 implicated in synaptic vesicle endocytosis and exocytosis. Plays a role in endocytosis mediated by clathrin and AP-2 (adaptor protein complex 2). Required for clathrin-coated pits assembly at the synapse. Participates in cell junction assembly. Modulates adherens junctions formation by facilitating CDH1/cadherin trafficking. Required for focal adhesion dynamics. Modulates the targeting of talins (TLN1 and TLN2) to the plasma membrane and their efficient assembly into focal adhesions. Regulates the interaction between talins (TLN1 and TLN2) and beta-integrins. Required for uropodium formation and retraction of the cell rear during directed migration. Has a role in growth factor-stimulated directional cell migration and adhesion. Required for talin assembly into nascent adhesions forming at the leading edge toward the direction of the growth factor. Negative regulator of T-cell activation and adhesion. Negatively regulates integrin alpha-L/beta-2 (LFA-1) polarization and adhesion induced by T-cell receptor. Together with PIP5K1A has a role during embryogenesis and together with PIP5K1B may have a role immediately after birth. In Rattus norvegicus (Rat), this protein is Phosphatidylinositol 4-phosphate 5-kinase type-1 gamma.